A 473-amino-acid chain; its full sequence is ATP synthase subunit beta, chloroplastic (473 aa).

Residue 172–179 (GGAGVGKT) coordinates ATP.

Belongs to the ATPase alpha/beta chains family. As to quaternary structure, F-type ATPases have 2 components, CF(1) - the catalytic core - and CF(0) - the membrane proton channel. CF(1) has five subunits: alpha(3), beta(3), gamma(1), delta(1), epsilon(1). CF(0) has four main subunits: a(1), b(1), b'(1) and c(9-12).

It localises to the plastid. It is found in the chloroplast thylakoid membrane. It catalyses the reaction ATP + H2O + 4 H(+)(in) = ADP + phosphate + 5 H(+)(out). Produces ATP from ADP in the presence of a proton gradient across the membrane. The catalytic sites are hosted primarily by the beta subunits. In Equisetum arvense (Field horsetail), this protein is ATP synthase subunit beta, chloroplastic.